The following is a 320-amino-acid chain: MARPKIALIGAGQIGGTLAHLAAIKELGDVVLFDIAEGTPQGKALDIAQSGPSEGFDAVMKGANSYEEIAGADVCIVTAGVPRKPGMSRDDLIGINLKVMKSVGEGIKAHAPNAFVICITNPLDAMVWALQQFSGLPAEKVVGMAGVLDSARFRHFLSVEFNVSMRDVTAFVLGGHGDTMVPLVRYSTVAGIPLPDLVQMGWTTQEKLDQIVQRTRDGGAEIVGLLKTGSAFYAPATSAIEMAEAYLKDQKRLLPCAAYVDGAFGLNGMYVGVPTIIGAGGIEKIVDIKLNDDEQAMFDKSVNAVKGLVEACKGIDSSLA.

NAD(+) contacts are provided by residues 10–15 (GAGQIG) and D34. Residues R83 and R89 each contribute to the substrate site. NAD(+) contacts are provided by residues N96 and 119 to 121 (ITN). Substrate is bound by residues N121 and R152. The Proton acceptor role is filled by H176.

It belongs to the LDH/MDH superfamily. MDH type 3 family.

It catalyses the reaction (S)-malate + NAD(+) = oxaloacetate + NADH + H(+). Catalyzes the reversible oxidation of malate to oxaloacetate. The sequence is that of Malate dehydrogenase from Cereibacter sphaeroides (strain ATCC 17029 / ATH 2.4.9) (Rhodobacter sphaeroides).